A 73-amino-acid chain; its full sequence is Probable movement protein p8 (73 aa).

Over residues 1–12 the composition is skewed to polar residues; it reads MSTVETPAQDTL. The segment at 1 to 48 is disordered; it reads MSTVETPAQDTLATKEPNKTGAKDRQQARSARLSVAAGAGRTALSQRD. The segment covering 16–27 has biased composition (basic and acidic residues); that stretch reads EPNKTGAKDRQQ.

It belongs to the carmovirus/necrovirus/panicovirus movement protein p8 family.

The protein localises to the host cell wall. In terms of biological role, cell-to-cell movement. This Muhlenbergia (Blackwell switchgrass) protein is Probable movement protein p8.